The primary structure comprises 260 residues: Ribonuclease PH (260 aa).

Phosphate-binding positions include Arg88 and 126 to 128 (GTR).

It belongs to the RNase PH family. In terms of assembly, homohexameric ring arranged as a trimer of dimers.

It catalyses the reaction tRNA(n+1) + phosphate = tRNA(n) + a ribonucleoside 5'-diphosphate. Functionally, phosphorolytic 3'-5' exoribonuclease that plays an important role in tRNA 3'-end maturation. Removes nucleotide residues following the 3'-CCA terminus of tRNAs; can also add nucleotides to the ends of RNA molecules by using nucleoside diphosphates as substrates, but this may not be physiologically important. Probably plays a role in initiation of 16S rRNA degradation (leading to ribosome degradation) during starvation. The protein is Ribonuclease PH of Mycobacterium sp. (strain JLS).